The chain runs to 437 residues: Adenylosuccinate synthetase (437 aa).

GTP is bound by residues 12–18 (GDEGKGK) and 40–42 (GHT). The active-site Proton acceptor is the Asp-13. Asp-13 and Gly-40 together coordinate Mg(2+). Residues 13-16 (DEGK), 38-41 (NAGH), Thr-128, Arg-142, Gln-223, Thr-238, and Arg-302 contribute to the IMP site. His-41 (proton donor) is an active-site residue. 298-304 (TTTGRRR) is a binding site for substrate. GTP contacts are provided by residues Arg-304, 330 to 332 (KLD), and 412 to 414 (SLG).

This sequence belongs to the adenylosuccinate synthetase family. In terms of assembly, homodimer. Mg(2+) is required as a cofactor.

It is found in the cytoplasm. It catalyses the reaction IMP + L-aspartate + GTP = N(6)-(1,2-dicarboxyethyl)-AMP + GDP + phosphate + 2 H(+). Its pathway is purine metabolism; AMP biosynthesis via de novo pathway; AMP from IMP: step 1/2. Functionally, plays an important role in the de novo pathway of purine nucleotide biosynthesis. Catalyzes the first committed step in the biosynthesis of AMP from IMP. This is Adenylosuccinate synthetase from Prochlorococcus marinus (strain MIT 9313).